Consider the following 42-residue polypeptide: Gastric inhibitory polypeptide (42 aa).

Belongs to the glucagon family.

The protein resides in the secreted. Potent stimulator of insulin secretion and relatively poor inhibitor of gastric acid secretion. This chain is Gastric inhibitory polypeptide (GIP), found in Bos taurus (Bovine).